The sequence spans 880 residues: DNA mismatch repair protein MutS (880 aa).

Position 605-612 (605-612 (GPNMSGKS)) interacts with ATP. Residues 790–829 (QETAAVPSRGVEPPAPVIEPTPAKEQTPVKEQTTPLVEES) are disordered. The segment covering 818-829 (VKEQTTPLVEES) has biased composition (polar residues).

This sequence belongs to the DNA mismatch repair MutS family.

In terms of biological role, this protein is involved in the repair of mismatches in DNA. It is possible that it carries out the mismatch recognition step. This protein has a weak ATPase activity. In Limosilactobacillus fermentum (strain NBRC 3956 / LMG 18251) (Lactobacillus fermentum), this protein is DNA mismatch repair protein MutS.